The chain runs to 793 residues: Probable serine/threonine-protein kinase fnkA (793 aa).

Residues 11–358 (WEILSQLGTG…IINLISHNFI (348 aa)) enclose the Protein kinase domain. ATP-binding positions include 17 to 25 (LGTGAFGRV) and lysine 46. Aspartate 138 functions as the Proton acceptor in the catalytic mechanism. 5 FNIP repeats span residues 403–444 (FNQT…FGAR), 470–514 (YNQP…ILGD), 515–557 (YDQK…LGYR), 558–601 (FNKA…LGYC), and 691–733 (FIRP…LGSR).

Belongs to the protein kinase superfamily. STE Ser/Thr protein kinase family. Requires Mg(2+) as cofactor.

It catalyses the reaction L-seryl-[protein] + ATP = O-phospho-L-seryl-[protein] + ADP + H(+). The enzyme catalyses L-threonyl-[protein] + ATP = O-phospho-L-threonyl-[protein] + ADP + H(+). The chain is Probable serine/threonine-protein kinase fnkA from Dictyostelium discoideum (Social amoeba).